The following is a 684-amino-acid chain: Glycine--tRNA ligase beta subunit (684 aa).

This sequence belongs to the class-II aminoacyl-tRNA synthetase family. Tetramer of two alpha and two beta subunits.

Its subcellular location is the cytoplasm. It carries out the reaction tRNA(Gly) + glycine + ATP = glycyl-tRNA(Gly) + AMP + diphosphate. The chain is Glycine--tRNA ligase beta subunit from Ectopseudomonas mendocina (strain ymp) (Pseudomonas mendocina).